A 329-amino-acid polypeptide reads, in one-letter code: Acetyl-coenzyme A carboxylase carboxyl transferase subunit alpha (329 aa).

In terms of domain architecture, CoA carboxyltransferase C-terminal spans 40 to 294 (QLESLAARRR…RAALERHLGE (255 aa)).

Belongs to the AccA family. As to quaternary structure, acetyl-CoA carboxylase is a heterohexamer composed of biotin carboxyl carrier protein (AccB), biotin carboxylase (AccC) and two subunits each of ACCase subunit alpha (AccA) and ACCase subunit beta (AccD).

The protein resides in the cytoplasm. The enzyme catalyses N(6)-carboxybiotinyl-L-lysyl-[protein] + acetyl-CoA = N(6)-biotinyl-L-lysyl-[protein] + malonyl-CoA. The protein operates within lipid metabolism; malonyl-CoA biosynthesis; malonyl-CoA from acetyl-CoA: step 1/1. Its function is as follows. Component of the acetyl coenzyme A carboxylase (ACC) complex. First, biotin carboxylase catalyzes the carboxylation of biotin on its carrier protein (BCCP) and then the CO(2) group is transferred by the carboxyltransferase to acetyl-CoA to form malonyl-CoA. This Parasynechococcus marenigrum (strain WH8102) protein is Acetyl-coenzyme A carboxylase carboxyl transferase subunit alpha.